The following is a 442-amino-acid chain: Syndecan-3 (442 aa).

Disordered stretches follow at residues 1-25 (MKPGPPRRGTAQGQRVDTATHGPGA) and 55-85 (RPVDLEGSGDDDSFPDDELDDLYSGSGSGYF). Residues 1-44 (MKPGPPRRGTAQGQRVDTATHGPGARGLLLPPLLLLLLAGRAAG) form the signal peptide. The Extracellular portion of the chain corresponds to 45–387 (AQRWRNENFE…SILERKEVLV (343 aa)). A compositionally biased stretch (acidic residues) spans 61–75 (GSGDDDSFPDDELDD). O-linked (Xyl...) (glycosaminoglycan) serine glycans are attached at residues S78, S80, S82, and S89. O-linked (GalNAc) threonine; by GALNT13 glycosylation occurs at T107. Disordered stretches follow at residues 151 to 175 (EEPSQRATTISTTTSTTAATTTGAP), 180 to 199 (APATAATTAPSTPAAPPATA), 225 to 244 (ATTPAVPSPPTTVTTLDTEA), 252 to 327 (TATS…TTQP), and 339 to 372 (AAAKPSPPLGTLPKGARPGLGLHDNAIDSGSSAA). Residues 157–175 (ATTISTTTSTTAATTTGAP) are compositionally biased toward low complexity. S161 carries O-linked (GalNAc) serine; by GALNT13 glycosylation. T162, T163, T170, and T172 each carry an O-linked (GalNAc) threonine; by GALNT13 glycan. Low complexity predominate over residues 276–287 (TLPLGTTAPGPT). Positions 289-303 (VAQTPTPESLLTTTQ) are enriched in polar residues. O-linked (Xyl...) (glycosaminoglycan) serine glycans are attached at residues S315 and S367. A helical transmembrane segment spans residues 388–408 (AVIVGGVVGALFAAFLVTLLI). Phosphotyrosine is present on residues Y409, Y419, Y431, and Y441. Over 409 to 442 (YRMKKKDEGSYTLEEPKQASVTYQKPDKQEEFYA) the chain is Cytoplasmic. The interval 419–442 (YTLEEPKQASVTYQKPDKQEEFYA) is disordered. Positions 433–442 (KPDKQEEFYA) are enriched in basic and acidic residues.

Belongs to the syndecan proteoglycan family. In terms of assembly, interacts with TIAM1. Interacts (via heparan sulfate chains) with PTN; this interaction mediates the neurite outgrowth-promoting signal from PTN to the cytoskeleton of growing neurites; this interaction mediates osteoblast recruitment. Interacts with MDK; this interaction induces SDC3 clustering; this interaction induces neuronal cell adhesion and neurite outgrowth. Post-translationally, O-glycosylated within the Thr/Ser-rich region which could interact with lectin domains on other molecules. As to expression, high levels in neonatal brain, heart, and Schwann cells, barely detectable in neonatal or adult liver, or adult brain.

Its subcellular location is the cell membrane. Functionally, cell surface proteoglycan that may bear heparan sulfate. May have a role in the organization of cell shape by affecting the actin cytoskeleton, possibly by transferring signals from the cell surface in a sugar-dependent mechanism. In Rattus norvegicus (Rat), this protein is Syndecan-3 (Sdc3).